Reading from the N-terminus, the 347-residue chain is Two pore potassium channel a (347 aa).

The segment covering 1-11 has biased composition (polar residues); it reads MDDNSIQQSLL. The interval 1-49 is disordered; it reads MDDNSIQQSLLADNPNVLQRKPSEGVNRFRRCRSTPSTDPLQGPPEKGS. The Cytoplasmic segment spans residues 1–65; the sequence is MDDNSIQQSL…LFKEMRPSFR (65 aa). Residues 66–86 traverse the membrane as a helical segment; it reads LVGLLLFIYLLVGVLAFYAVM. Residues 99–118 constitute an intramembrane region (pore-forming); that stretch reads DALYFCVVTMTTVGYGDLVP. A helical membrane pass occupies residues 125–145; that stretch reads LLACAFVFMGMAVVALFVSKV. Residues 146-183 lie on the Cytoplasmic side of the membrane; the sequence is ADYLVEKQEVLFFKALHTNLKGGETKMLRAIETNRIKY. The helical transmembrane segment at 184 to 204 threads the bilayer; that stretch reads KFYTNALLLVLSIISGTVFLW. The segment at residues 213-232 is an intramembrane region (pore-forming); it reads DSFYCVCATITTLGYGDKSF. The chain crosses the membrane as a helical span at residues 239-259; it reads VFAVFWIITSTIIMAQFFMYL. The Cytoplasmic segment spans residues 260-347; that stretch reads AEIYTERRQK…YDLTLAQSAQ (88 aa). EF-hand domains are found at residues 276–311 and 315–347; these read LTRK…ELGK and EEIS…QSAQ. Residues Asp289, Asp291, Asp293, Gln295, Glu300, Asp328, Asp330, Ser332, Thr334, and Asp339 each coordinate Ca(2+).

It belongs to the two pore domain potassium channel (TC 1.A.1.7) family. As to quaternary structure, homodimer.

It localises to the vacuole membrane. Highly selective inward-rectifying potassium channel that is specifically located in the tonoplast of large vacuoles. Functions independently of the voltage difference across the membrane. The sequence is that of Two pore potassium channel a (TPKA) from Oryza sativa subsp. japonica (Rice).